The following is an 82-amino-acid chain: EMBRYO SURROUNDING FACTOR 1.2 (82 aa).

Residues 1 to 23 (MKSQTVLISIFIFSFFALHQCMQ) form the signal peptide. 4 cysteine pairs are disulfide-bonded: cysteine 40–cysteine 56, cysteine 45–cysteine 77, cysteine 54–cysteine 71, and cysteine 57–cysteine 64.

Belongs to the MEG family. In terms of tissue distribution, expressed exclusively in ovule embryo sacs and in early developing endosperms.

In terms of biological role, maternally-contributed central cell peptide regulating suspensor development and correct auxin distribution in early developing embryos. The sequence is that of EMBRYO SURROUNDING FACTOR 1.2 (ESF1.2) from Arabidopsis thaliana (Mouse-ear cress).